The chain runs to 157 residues: Ubiquitin-like protein 4A (157 aa).

The Ubiquitin-like domain occupies 1–76 (MQLTVKALQG…LNLVVKPLEK (76 aa)). Residue Lys-48 forms a Glycyl lysine isopeptide (Lys-Gly) (interchain with G-Cter in ubiquitin) linkage. A Phosphoserine modification is found at Ser-90. Positions 96 to 138 (WHLISKVLARHFSAADASRVLEQLQRDYERSLSRLTLDDIERL) are required and sufficient for interaction with BAG6.

In terms of assembly, component of the BAG6/BAT3 complex, at least composed of BAG6, UBL4A and GET4/TRC35. Interacts with BAG6; the interaction is direct and required for UBL4A protein stability. Interacts with USP13; may be indirect via BAG6. Polyubiquitinated. Ubiquitination by AMFR and deubiquitination by USP13 may regulate the interaction between the BAG6/BAT3 complex and SGTA and therefore may regulate client proteins fate.

The protein localises to the cytoplasm. Its subcellular location is the cytosol. The protein resides in the nucleus. Its function is as follows. As part of a cytosolic protein quality control complex, the BAG6/BAT3 complex, maintains misfolded and hydrophobic patches-containing proteins in a soluble state and participates in their proper delivery to the endoplasmic reticulum or alternatively can promote their sorting to the proteasome where they undergo degradation. The BAG6/BAT3 complex is involved in the post-translational delivery of tail-anchored/type II transmembrane proteins to the endoplasmic reticulum membrane. Recruited to ribosomes, it interacts with the transmembrane region of newly synthesized tail-anchored proteins and together with SGTA and ASNA1 mediates their delivery to the endoplasmic reticulum. Client proteins that cannot be properly delivered to the endoplasmic reticulum are ubiquitinated and sorted to the proteasome. Similarly, the BAG6/BAT3 complex also functions as a sorting platform for proteins of the secretory pathway that are mislocalized to the cytosol either delivering them to the proteasome for degradation or to the endoplasmic reticulum. The BAG6/BAT3 complex also plays a role in the endoplasmic reticulum-associated degradation (ERAD), a quality control mechanism that eliminates unwanted proteins of the endoplasmic reticulum through their retrotranslocation to the cytosol and their targeting to the proteasome. It maintains these retrotranslocated proteins in an unfolded yet soluble state condition in the cytosol to ensure their proper delivery to the proteasome. This is Ubiquitin-like protein 4A (UBL4A) from Oryctolagus cuniculus (Rabbit).